Consider the following 646-residue polypeptide: Exoribonuclease 2 (646 aa).

One can recognise an RNB domain in the interval 191 to 518 (RIDLTALDFV…NHRLLKAIIQ (328 aa)). Positions 563–645 (DKTFSAEIVD…ETRNIVARPV (83 aa)) constitute an S1 motif domain.

Belongs to the RNR ribonuclease family. RNase II subfamily.

It localises to the cytoplasm. It carries out the reaction Exonucleolytic cleavage in the 3'- to 5'-direction to yield nucleoside 5'-phosphates.. Its function is as follows. Involved in mRNA degradation. Hydrolyzes single-stranded polyribonucleotides processively in the 3' to 5' direction. The protein is Exoribonuclease 2 of Xenorhabdus bovienii (strain SS-2004) (Xenorhabdus nematophila subsp. bovienii).